A 305-amino-acid chain; its full sequence is Ornithine carbamoyltransferase (305 aa).

Residues 47 to 50 (STRT), Arg-98, and 125 to 128 (HPCQ) each bind carbamoyl phosphate. L-ornithine is bound by residues Asn-156, Asp-221, and 225–226 (SM). Carbamoyl phosphate-binding positions include 262-263 (CL) and Arg-290.

Belongs to the aspartate/ornithine carbamoyltransferase superfamily. OTCase family.

The protein resides in the cytoplasm. The catalysed reaction is carbamoyl phosphate + L-ornithine = L-citrulline + phosphate + H(+). It participates in amino-acid biosynthesis; L-arginine biosynthesis; L-arginine from L-ornithine and carbamoyl phosphate: step 1/3. Reversibly catalyzes the transfer of the carbamoyl group from carbamoyl phosphate (CP) to the N(epsilon) atom of ornithine (ORN) to produce L-citrulline. This is Ornithine carbamoyltransferase from Methanococcus vannielii (strain ATCC 35089 / DSM 1224 / JCM 13029 / OCM 148 / SB).